A 578-amino-acid chain; its full sequence is GPI-anchor transamidase component PIGT (578 aa).

The first 21 residues, 1-21 (MAAAMPLALLVLLLLGPGGWC), serve as a signal peptide directing secretion. The Lumenal segment spans residues 22 to 525 (LAEPPRDSLR…NLPTPDFSMP (504 aa)). N-linked (GlcNAc...) asparagine glycosylation occurs at N164. 2 cysteine pairs are disulfide-bonded: C195–C272 and C226–C231. N-linked (GlcNAc...) asparagine glycosylation is found at N291 and N327. The a 2-acyl-6-[6-phosphoethanolamine-alpha-D-mannosyl-(1-&gt;2)-6-phosphoethanolamine-alpha-D-mannosyl-(1-&gt;6)-2-phosphoethanolamine-alpha-D-mannosyl-(1-&gt;4)-alpha-D-glucosaminyl]-1-(1-radyl,2-acyl-sn-glycero-3-phospho)-1D-myo-inositol site is built by N461, D521, S523, and N527. Residues 526 to 548 (YNVICLTCTVVAVCYGSFYNLLT) traverse the membrane as a helical segment. At 549 to 578 (RTFHIEEPRTGGLAKRLANLIRRARGVPPL) the chain is on the cytoplasmic side.

Belongs to the PIGT family. In terms of assembly, heteropentamer. Part of the GPI-anchor transamidase complex, consisting of PIGK, PIGT, PIGS, PIGU and GAA1. In terms of processing, the disulfide bond between PIGK/GPI8 and PIGT is important for normal enzyme activity.

The protein localises to the endoplasmic reticulum membrane. The protein operates within glycolipid biosynthesis; glycosylphosphatidylinositol-anchor biosynthesis. Its function is as follows. Component of the glycosylphosphatidylinositol-anchor (GPI-anchor) transamidase (GPI-T) complex that catalyzes the formation of the linkage between a proprotein and a GPI-anchor and participates in GPI anchored protein biosynthesis. May play a crucial role in GPI-T complex assembly in the luminal layer. Binds GPI-anchor. This chain is GPI-anchor transamidase component PIGT, found in Homo sapiens (Human).